A 619-amino-acid polypeptide reads, in one-letter code: MAASPGSGSANPRKFSEKIALHTQRQAEETRAFEQLMTDLTLSRVQFQKLQQLRLTQYHGGSLPNVSQLRNSAPEFQPSLHQADNVRGTRHHGLVERPARNRFHPLHRRSGDKPGRQFDGNAFAASYSSQHLDESWPRQQPPWKEEKHPGFRLTSALNRTNSDSALHTSALSTKPQDPYGGGGQSAWPAPYMGFCDGENDGHAEVAAFPGPLKEENLLNVPKPLPKHLWESKEIQSLSGRPRSCDVGGGNAFPHNGQNTGLSPFLGTLNTGGSLPDLTNLHYSAPLPASLDTSDHLFGSMSVGNSVGNLPAAMTHLGIRTSSGLQSSRSNPSIQATLSKMALSSSLKCHPQPSVANASALHPSLRLFSLSNPSLSTTNLSGPSRRRQPPVSPLTLSPGPEAHQGFSRQLSATSPLNPYPASQMVTSEQSPLSFLPTDAQAQVSPPPPYPTPQELPQPLLQQPHAQEPPTQQPQAAPSLPQSDFQLLTAQGSALTSFFPDVRFDQQPMRPSPAFPQQVPLVQQSHREPQDSFHLRPNPYSSCGSFPGTILTEDTNSNLFKGLSGGLSGMPEVSLDMDTPFPLEEELQIEPLSLDGLNMLSDSSMGLLDPSVEETFRADRL.

Residues Ser-4 and Ser-62 each carry the phosphoserine modification. The disordered stretch occupies residues 129-148 (SQHLDESWPRQQPPWKEEKH). Thr-160 carries the post-translational modification Phosphothreonine. A Phosphoserine; by SIK2 modification is found at Ser-162. Lys-232 is covalently cross-linked (Glycyl lysine isopeptide (Lys-Gly) (interchain with G-Cter in SUMO2)). Residues Ser-273, Ser-329, Ser-332, Ser-370, Ser-391, Ser-396, and Ser-410 each carry the phosphoserine modification. The tract at residues 375–478 (STTNLSGPSR…TQQPQAAPSL (104 aa)) is disordered. Residues 380-401 (SGPSRRRQPPVSPLTLSPGPEA) form a required for interaction with PPP2CA and PPP2R1A region. Composition is skewed to polar residues over residues 405 to 415 (FSRQLSATSPL) and 422 to 431 (QMVTSEQSPL). Ser-443 is subject to Phosphoserine. Over residues 443 to 454 (SPPPPYPTPQEL) the composition is skewed to pro residues. The span at 455 to 478 (PQPLLQQPHAQEPPTQQPQAAPSL) shows a compositional bias: low complexity.

The protein belongs to the TORC family. In terms of assembly, binding, as a tetramer, through its N-terminal region, with the bZIP domain of CREB1 enhances recruitment of TAF4 to the promoter. 'Arg-314' in the bZIP domain of CREB1 is essential for this interaction. Interacts (when phosphorylated at Ser-162 and Se-273) with 14-3-3 proteins. Interacts with YWHAE. Interacts (when phosphorylated at Ser-391) with phosphatase PP2A catalytic subunit PPP2CA and regulatory subunits PPP2R1A and PPP2R2A. Phosphorylation/dephosphorylation states of Ser-273 are required for regulating transduction of CREB activity. CRTCs/TORCs are inactive when phosphorylated, and active when dephosphorylated at this site. May be phosphorylated at Ser-391 by MAPK3/ERK1 and/or MAPK1/ERK2 or by some cyclin-dependent kinases such as CDK1,CDK2 or CDK5. Following adenylyl cyclase activation, dephosphorylated at Ser-162 and Ser-273 resulting in its dissociation from 14-3-3 proteins probably promoting CRTC3 translocation into the nucleus. In terms of tissue distribution, expressed in brown adipose tissues.

The protein resides in the nucleus. Its subcellular location is the cytoplasm. Its function is as follows. Transcriptional coactivator for CREB1 which activates transcription through both consensus and variant cAMP response element (CRE) sites. Acts as a coactivator, in the SIK/TORC signaling pathway, being active when dephosphorylated. Acts independently of CREB1 'Ser-133' phosphorylation. Enhances the interaction of CREB1 with TAF4. Regulates the expression of specific CREB-activated genes such as the steroidogenic gene, StAR. Potent coactivator of PPARGC1A and inducer of mitochondrial biogenesis in muscle cells. The polypeptide is CREB-regulated transcription coactivator 3 (Crtc3) (Mus musculus (Mouse)).